We begin with the raw amino-acid sequence, 679 residues long: Glycine--tRNA ligase beta subunit (679 aa).

Belongs to the class-II aminoacyl-tRNA synthetase family. As to quaternary structure, tetramer of two alpha and two beta subunits.

The protein localises to the cytoplasm. It carries out the reaction tRNA(Gly) + glycine + ATP = glycyl-tRNA(Gly) + AMP + diphosphate. The polypeptide is Glycine--tRNA ligase beta subunit (Streptococcus mutans serotype c (strain ATCC 700610 / UA159)).